The sequence spans 263 residues: uncharacterized protein (263 aa).

The next 7 membrane-spanning stretches (helical) occupy residues 53–73 (FWII…LVKI), 103–123 (GFLF…LPGL), 130–150 (IILP…VFSY), 153–173 (LIPA…EPLW), 181–201 (FILV…IQIL), 213–233 (MLAA…ILTP), and 241–261 (LLLS…LFLI).

The protein belongs to the TatC family.

It is found in the plastid. The protein resides in the chloroplast membrane. This is an uncharacterized protein from Trieres chinensis (Marine centric diatom).